Reading from the N-terminus, the 285-residue chain is K88 fimbrial protein AB (285 aa).

Residues 1-21 (MKKTLIALAIAASAASGMAHA) form the signal peptide.

Belongs to the fimbrial K88 protein family. In terms of assembly, K88 fimbria, 0.1-1 micrometer in length and 7 nanometers in diameter, is composed of about 100 identical subunits.

It localises to the fimbrium. In terms of biological role, K88 major fimbrial subunit. Fimbriae (also called pili), are polar filaments radiating from the surface of the bacterium to a length of 0.5-1.5 micrometers and numbering 100-300 per cell. They enable bacteria to colonize the epithelium of specific host organs. In Escherichia coli, this protein is K88 fimbrial protein AB (faeG).